Consider the following 767-residue polypeptide: 5-methyltetrahydropteroyltriglutamate--homocysteine methyltransferase (767 aa).

K19 is a binding site for 5-methyltetrahydropteroyltri-L-glutamate. S89 carries the post-translational modification Phosphoserine. N126 is a 5-methyltetrahydropteroyltri-L-glutamate binding site. A Phosphoserine modification is found at S242. L-homocysteine-binding positions include 444-446 (IGS) and E497. Residues 444 to 446 (IGS) and E497 contribute to the L-methionine site. Residues D502, Y525, and 528 to 529 (RY) contribute to the 5-methyltetrahydropteroyltri-L-glutamate site. Residue T566 is modified to Phosphothreonine. W574 provides a ligand contact to 5-methyltetrahydropteroyltri-L-glutamate. D612 contributes to the L-homocysteine binding site. D612 lines the L-methionine pocket. The residue at position 629 (S629) is a Phosphoserine. 3 residues coordinate Zn(2+): H655, C657, and E677. H705 functions as the Proton donor in the catalytic mechanism. Position 706 is a phosphoserine (S706). Residue C737 participates in Zn(2+) binding.

This sequence belongs to the vitamin-B12 independent methionine synthase family. It depends on Zn(2+) as a cofactor.

The enzyme catalyses 5-methyltetrahydropteroyltri-L-glutamate + L-homocysteine = tetrahydropteroyltri-L-glutamate + L-methionine. It functions in the pathway amino-acid biosynthesis; L-methionine biosynthesis via de novo pathway; L-methionine from L-homocysteine (MetE route): step 1/1. Functionally, catalyzes the transfer of a methyl group from 5-methyltetrahydrofolate to homocysteine resulting in methionine formation. The sequence is that of 5-methyltetrahydropteroyltriglutamate--homocysteine methyltransferase (MET6) from Saccharomyces cerevisiae (strain ATCC 204508 / S288c) (Baker's yeast).